Reading from the N-terminus, the 368-residue chain is Ribosomal RNA large subunit methyltransferase M (368 aa).

S-adenosyl-L-methionine contacts are provided by residues Ser192, 225 to 228 (APGG), Asp244, Asp264, and Asp281. The active-site Proton acceptor is the Lys310.

It belongs to the class I-like SAM-binding methyltransferase superfamily. RNA methyltransferase RlmE family. RlmM subfamily. Monomer.

The protein resides in the cytoplasm. It catalyses the reaction cytidine(2498) in 23S rRNA + S-adenosyl-L-methionine = 2'-O-methylcytidine(2498) in 23S rRNA + S-adenosyl-L-homocysteine + H(+). Catalyzes the 2'-O-methylation at nucleotide C2498 in 23S rRNA. In Colwellia psychrerythraea (strain 34H / ATCC BAA-681) (Vibrio psychroerythus), this protein is Ribosomal RNA large subunit methyltransferase M.